The sequence spans 657 residues: Serine/threonine kinase NLK (657 aa).

The 347-residue stretch at 208–554 (SQPDRPIGYG…VEEALSHPYL (347 aa)) folds into the Protein kinase domain. ATP-binding positions include 214–222 (IGYGAFGVV) and lysine 237. The active-site Proton acceptor is aspartate 391.

This sequence belongs to the protein kinase superfamily. Ser/Thr protein kinase family. In terms of assembly, component of the beta-catenin-lit-1 complex (also called the lit-1/wrm-1 complex or the wrm-1/lit-1 kinase complex) at least composed of lit-1 and wrm-1. Interacts with wrm-1 (via N-terminus); the interaction is direct and activates lit-1 kinase activity which leads to the phosphorylation of pop-1. This promotes pop-1 interaction with par-5 and translocation of pop-1 from the nucleus to the cytoplasm. Interacts with pop-1 (when phosphorylated on 'Ser-125'); the interaction is dependent on the beta-catenin-lit-1 complex. Mg(2+) is required as a cofactor.

It localises to the cytoplasm. It is found in the cell cortex. The protein resides in the nucleus. The enzyme catalyses L-seryl-[protein] + ATP = O-phospho-L-seryl-[protein] + ADP + H(+). It catalyses the reaction L-threonyl-[protein] + ATP = O-phospho-L-threonyl-[protein] + ADP + H(+). Its function is as follows. Has a role in the Wnt signaling pathway controlling the asymmetry of cell divisions during embryogenesis. Operates in the AB and EMS cell lineages influencing cell specification. Required for body wall muscle development, endoderm development, pop-1 asymmetry and T-cell division asymmetry. Component of the beta-catenin-lit-1 complex which promotes the phosphorylation, down-regulation and subcellular relocation of pop-1. Regulates plp-1 nuclear localization in embryos. Plays a role in male tail tip morphogenesis. The protein is Serine/threonine kinase NLK of Caenorhabditis briggsae.